The chain runs to 358 residues: 3-isopropylmalate dehydrogenase (358 aa).

NAD(+) is bound at residue Gly-77–Glu-90. Residues Arg-98, Arg-108, Arg-137, and Asp-226 each contribute to the substrate site. Mg(2+) contacts are provided by Asp-226, Asp-250, and Asp-254. NAD(+) is bound at residue Gly-284–Asn-296.

The protein belongs to the isocitrate and isopropylmalate dehydrogenases family. LeuB type 1 subfamily. In terms of assembly, homodimer. Mg(2+) serves as cofactor. Requires Mn(2+) as cofactor.

The protein localises to the cytoplasm. It catalyses the reaction (2R,3S)-3-isopropylmalate + NAD(+) = 4-methyl-2-oxopentanoate + CO2 + NADH. The protein operates within amino-acid biosynthesis; L-leucine biosynthesis; L-leucine from 3-methyl-2-oxobutanoate: step 3/4. In terms of biological role, catalyzes the oxidation of 3-carboxy-2-hydroxy-4-methylpentanoate (3-isopropylmalate) to 3-carboxy-4-methyl-2-oxopentanoate. The product decarboxylates to 4-methyl-2 oxopentanoate. This chain is 3-isopropylmalate dehydrogenase, found in Haemophilus influenzae (strain 86-028NP).